Reading from the N-terminus, the 477-residue chain is UDP-N-acetylglucosamine pyrophosphorylase (477 aa).

The Substrate binding motif lies at 109–112 (MAGG). Residues 109 to 112 (MAGG), Lys-123, and Gln-194 contribute to the UTP site. The residue at position 218 (Ser-218) is a Phosphoserine. Gly-221 is a UTP binding site. Asn-222 contacts substrate. Asp-252 contacts UTP. A Substrate binding motif is present at residues 302 to 303 (EY). Lys-377 is a binding site for UTP. Lys-409 serves as a coordination point for substrate. The residue at position 461 (Ser-461) is a Phosphoserine.

This sequence belongs to the UDPGP type 1 family.

It localises to the cytoplasm. It carries out the reaction N-acetyl-alpha-D-glucosamine 1-phosphate + UTP + H(+) = UDP-N-acetyl-alpha-D-glucosamine + diphosphate. It participates in nucleotide-sugar biosynthesis; UDP-N-acetyl-alpha-D-glucosamine biosynthesis; UDP-N-acetyl-alpha-D-glucosamine from N-acetyl-alpha-D-glucosamine 1-phosphate: step 1/1. UDP-N-acetylglucosamine pyrophosphorylase that utilizes N-acetylglucosamine-1-phosphate as substrate. Together with AGM1, is involved in the production of UDP-N-acetylglucosamine from N-acetylglucosamine-6-phosphate. This Saccharomyces cerevisiae (strain ATCC 204508 / S288c) (Baker's yeast) protein is UDP-N-acetylglucosamine pyrophosphorylase (QRI1).